The chain runs to 263 residues: Methylesterase 3 (263 aa).

The Acyl-ester intermediate role is filled by Ser85. Active-site charge relay system residues include Asp213 and His241.

This sequence belongs to the AB hydrolase superfamily. Methylesterase family.

The enzyme catalyses methyl (indol-3-yl)acetate + H2O = (indol-3-yl)acetate + methanol + H(+). It carries out the reaction methyl (-)-jasmonate + H2O = jasmonate + methanol + H(+). The protein operates within plant hormone biosynthesis. It participates in lipid metabolism; oxylipin biosynthesis. Its function is as follows. Methylesterase shown to have carboxylesterase activity, methyl indole-3-acetic acid (MeIAA) esterase activity and methyl jasmonate (MeJA) esterase activity in vitro. The polypeptide is Methylesterase 3 (Arabidopsis thaliana (Mouse-ear cress)).